Consider the following 566-residue polypeptide: Beta,beta-carotene 15,15'-dioxygenase (566 aa).

Fe cation is bound by residues histidine 172, histidine 237, histidine 308, and histidine 514. The tract at residues 530 to 566 is disordered; it reads PAETQEVENSDHPTDPTAPELSHSENDFTAGHGGSSL.

Belongs to the carotenoid oxygenase family. Requires Fe(2+) as cofactor. Expressed in liver, kidney, small intestine and testis.

It localises to the cytoplasm. The protein resides in the cytosol. The catalysed reaction is all-trans-beta-carotene + O2 = 2 all-trans-retinal. The protein operates within cofactor metabolism; retinol metabolism. Its function is as follows. Symmetrically cleaves beta-carotene into two molecules of retinal using a dioxygenase mechanism. This is Beta,beta-carotene 15,15'-dioxygenase from Mus musculus (Mouse).